Consider the following 190-residue polypeptide: dCTP deaminase (190 aa).

107–112 (KSTYAR) lines the dCTP pocket. The active-site Proton donor/acceptor is E133. Residues Q152, Y166, and Q176 each coordinate dCTP.

It belongs to the dCTP deaminase family. In terms of assembly, homotrimer.

The enzyme catalyses dCTP + H2O + H(+) = dUTP + NH4(+). It functions in the pathway pyrimidine metabolism; dUMP biosynthesis; dUMP from dCTP (dUTP route): step 1/2. Catalyzes the deamination of dCTP to dUTP. The sequence is that of dCTP deaminase from Campylobacter hominis (strain ATCC BAA-381 / DSM 21671 / CCUG 45161 / LMG 19568 / NCTC 13146 / CH001A).